Here is a 532-residue protein sequence, read N- to C-terminus: Phosphoenolpyruvate carboxykinase (ATP) (532 aa).

3 residues coordinate substrate: R60, Y194, and K200. Residues K200, H219, and 237 to 245 each bind ATP; that span reads GLSGTGKTT. Mn(2+) is bound by residues K200 and H219. D258 is a binding site for Mn(2+). Positions 286, 324, and 449 each coordinate ATP. Residue R324 coordinates substrate.

It belongs to the phosphoenolpyruvate carboxykinase (ATP) family. Mn(2+) is required as a cofactor.

Its subcellular location is the cytoplasm. It catalyses the reaction oxaloacetate + ATP = phosphoenolpyruvate + ADP + CO2. Its pathway is carbohydrate biosynthesis; gluconeogenesis. In terms of biological role, involved in the gluconeogenesis. Catalyzes the conversion of oxaloacetate (OAA) to phosphoenolpyruvate (PEP) through direct phosphoryl transfer between the nucleoside triphosphate and OAA. This chain is Phosphoenolpyruvate carboxykinase (ATP), found in Roseobacter denitrificans (strain ATCC 33942 / OCh 114) (Erythrobacter sp. (strain OCh 114)).